The primary structure comprises 377 residues: METLAKHLDACQEQLLELYEENSNELTKHIQHWKCVRHENVLLYKARQMGLSHIGLQVVPPLKVSQTKGHEAIEMQMTLETVLKSEYGTEPWTLQETSFEMWLTPPKHCFKKQGQTVEVRYDCNAENSMHYVLWKYIYVCENDRWQKVKGMVDIKGLYYMVGQCKTYYIDFEKEAKQYSKTLQWEVCYDSKVICSPASVSSTVQEVSIAGPTSHSTTTLAQATCAVSSIATEDSVQAPPYKRLRGPSHCARKLQNTSNIVCATDRGTLDSENNINNNNYNNNNQQRNNSNSSGTPIVQLQGDSNNLKCFRYRLHDKYKHLFMLASSTWHWTASSNSTKNAIVTLTYVNEQQRQDFLNTVKIPATIKHTLGFMSFQLL.

The interval Met-1 to Ser-200 is transactivation domain. Positions Ser-270–Val-297 are disordered. Residues Asn-272–Ser-292 are compositionally biased toward low complexity. A DNA-binding domain region spans residues Gly-293–Leu-377.

This sequence belongs to the papillomaviridae E2 protein family. In terms of assembly, binds DNA as homodimer. Interacts with protein E1; this interaction greatly increases E1 DNA-binding activity. Interacts with protein L1; this interaction enhances E2-dependent replication and transcription activation. Interacts with protein L2; this interaction inhibits E2 transcriptional activity but not DNA replication function E2. Interacts with protein E7; this interaction inhibits E7 oncogenic activity. Interacts with host TAF1; this interaction modulates E2-dependent transcriptional regulation. Interacts with host BRD4; this interaction mediates E2 transcriptional activation function. Additionally, the interaction with host BRD4 on mitotic chromosomes mediates tethering of the viral genome. Interacts with host TOPBP1; this interaction is required for optimal viral DNA replication. Post-translationally, phosphorylated.

The protein localises to the host nucleus. In terms of biological role, plays a role in the initiation of viral DNA replication. A dimer of E2 interacts with a dimer of E1 in order to improve specificity of E1 DNA binding activity. Once the complex recognizes and binds DNA at specific sites, the E2 dimer is removed from DNA. E2 also regulates viral transcription through binding to the E2RE response element (5'-ACCNNNNNNGGT-3') present in multiple copies in the regulatory regions of the viral genome. Activates or represses transcription depending on E2RE's position with regards to proximal promoter elements including the TATA-box. Repression occurs by sterically hindering the assembly of the transcription initiation complex. This chain is Regulatory protein E2, found in Pygmy chimpanzee papillomavirus type 1 (PCPV-1).